The following is a 364-amino-acid chain: DNA polymerase IV (364 aa).

In terms of domain architecture, UmuC spans 14-198; the sequence is IIHIDMDAFF…LPVEKFHGVG (185 aa). Mg(2+)-binding residues include D18 and D116. Residue E117 is part of the active site.

Belongs to the DNA polymerase type-Y family. Monomer. Mg(2+) serves as cofactor.

It localises to the cytoplasm. It catalyses the reaction DNA(n) + a 2'-deoxyribonucleoside 5'-triphosphate = DNA(n+1) + diphosphate. Functionally, poorly processive, error-prone DNA polymerase involved in untargeted mutagenesis. Copies undamaged DNA at stalled replication forks, which arise in vivo from mismatched or misaligned primer ends. These misaligned primers can be extended by PolIV. Exhibits no 3'-5' exonuclease (proofreading) activity. May be involved in translesional synthesis, in conjunction with the beta clamp from PolIII. The chain is DNA polymerase IV from Lactococcus lactis subsp. cremoris (strain SK11).